The following is a 448-amino-acid chain: MSTSIKEKVSLVSLGCPKNLVDAEVMLGYLAKEKYEVTTDEREADIIIVNTCSFIKEAKQESIDTILDLADRKHDARCRLLIVTGCLPQRYQEELVKELPEVDIFVGTGDYPRIAEIIAEKEGMSEQLRYTGDPNFLYDEDLPRLQSSPYYTAYLKIAEGCSNCCSYCVIPSLRGAFRSRPLDKLLKEARELVARGVKEINLIAQDITGYGKDLAGGASLEGLIKELAALDGLQWIRLLYAYPDGISDSLIQLIRDEDKVCKYLDIPLQHVSDPVLKRMNRRSSEAEIRSLIAKLRGEIPGIALRTSLIVGFPGETDEDFKKLLHFVEETRFDRLGVFCYSREEGTPSAEMPDQVSERVKRERYKKLMRTQARVSFKHNRSLVDTEELVLIEGYSEETELLLKGRSSKQAPDIDGQVYVTSGNAQIGDIVKLRITDSSDYDLIGEIVP.

Residues 7-123 enclose the MTTase N-terminal domain; sequence EKVSLVSLGC…IAEIIAEKEG (117 aa). The [4Fe-4S] cluster site is built by cysteine 16, cysteine 52, cysteine 86, cysteine 161, cysteine 165, and cysteine 168. The 231-residue stretch at 147 to 377 folds into the Radical SAM core domain; the sequence is SSPYYTAYLK…MRTQARVSFK (231 aa). The TRAM domain maps to 380–448; the sequence is RSLVDTEELV…DYDLIGEIVP (69 aa).

It belongs to the methylthiotransferase family. RimO subfamily. It depends on [4Fe-4S] cluster as a cofactor.

The protein localises to the cytoplasm. The catalysed reaction is L-aspartate(89)-[ribosomal protein uS12]-hydrogen + (sulfur carrier)-SH + AH2 + 2 S-adenosyl-L-methionine = 3-methylsulfanyl-L-aspartate(89)-[ribosomal protein uS12]-hydrogen + (sulfur carrier)-H + 5'-deoxyadenosine + L-methionine + A + S-adenosyl-L-homocysteine + 2 H(+). Functionally, catalyzes the methylthiolation of an aspartic acid residue of ribosomal protein uS12. The chain is Ribosomal protein uS12 methylthiotransferase RimO from Geotalea uraniireducens (strain Rf4) (Geobacter uraniireducens).